Reading from the N-terminus, the 184-residue chain is ATP synthase subunit b, chloroplastic (184 aa).

Residues L27 to L49 form a helical membrane-spanning segment.

This sequence belongs to the ATPase B chain family. In terms of assembly, F-type ATPases have 2 components, F(1) - the catalytic core - and F(0) - the membrane proton channel. F(1) has five subunits: alpha(3), beta(3), gamma(1), delta(1), epsilon(1). F(0) has four main subunits: a(1), b(1), b'(1) and c(10-14). The alpha and beta chains form an alternating ring which encloses part of the gamma chain. F(1) is attached to F(0) by a central stalk formed by the gamma and epsilon chains, while a peripheral stalk is formed by the delta, b and b' chains.

The protein resides in the plastid. It is found in the chloroplast thylakoid membrane. In terms of biological role, f(1)F(0) ATP synthase produces ATP from ADP in the presence of a proton or sodium gradient. F-type ATPases consist of two structural domains, F(1) containing the extramembraneous catalytic core and F(0) containing the membrane proton channel, linked together by a central stalk and a peripheral stalk. During catalysis, ATP synthesis in the catalytic domain of F(1) is coupled via a rotary mechanism of the central stalk subunits to proton translocation. Its function is as follows. Component of the F(0) channel, it forms part of the peripheral stalk, linking F(1) to F(0). This chain is ATP synthase subunit b, chloroplastic, found in Buxus microphylla (Littleleaf boxwood).